Reading from the N-terminus, the 112-residue chain is Transmembrane protein 14C (112 aa).

A run of 4 helical transmembrane segments spans residues 7 to 27 (VVPL…GGII), 32 to 52 (AGSV…GLGA), 62 to 82 (VWVF…RFYH), and 88 to 108 (PAGL…VSMF).

This sequence belongs to the TMEM14 family.

Its subcellular location is the mitochondrion membrane. In terms of biological role, required for normal heme biosynthesis. This is Transmembrane protein 14C (TMEM14C) from Homo sapiens (Human).